The chain runs to 842 residues: Leucine--tRNA ligase (842 aa).

Residues 62–72 (PYPSGDLHMGH) carry the 'HIGH' region motif. The tract at residues 390 to 414 (GDEDPAETGVATAGEGTLKNSGELD) is disordered. A 'KMSKS' region motif is present at residues 607–611 (AMSKS). K610 is a binding site for ATP.

It belongs to the class-I aminoacyl-tRNA synthetase family.

The protein localises to the cytoplasm. It carries out the reaction tRNA(Leu) + L-leucine + ATP = L-leucyl-tRNA(Leu) + AMP + diphosphate. The polypeptide is Leucine--tRNA ligase (Paenarthrobacter aurescens (strain TC1)).